An 860-amino-acid chain; its full sequence is MQEQYRPEEIESKVQLHWDEKRTFEVTEDESKEKYYCLSMLPYPSGRLHMGHVRNYTIGDVIARYQRMLGKNVLQPIGWDAFGLPAEGAAVKNNTAPAPWTYDNIAYMKNQLKMLGFGYDWSRELATCTPEYYRWEQKFFTELYKKGLVYKKTSAVNWCPNDQTVLANEQVIDGCCWRCDTKVERKEIPQWFIKITAYADELLNDLDKLDHWPDTVKTMQRNWIGRSEGVEITFNVNDYDNTLTVYTTRPDTFMGCTYLAVAAGHPLAQKAAENNPELAAFIDECRNTKVAEAEMATMEKKGVDTGFKAVHPLTGEEIPVWAANFVLMEYGTGAVMAVPGHDQRDYEFASKYGLNIKPVILAADGSEPDLSQQALTEKGVLFNSGEFNGLDHEAAFNAIADKLTAMGVGERKVNYRLRDWGVSRQRYWGAPIPMVTLEDGTVMPTPDDQLPVILPEDVVMDGITSPIKADPEWAKTTVNGMPALRETDTFDTFMESSWYYARYTCPEYKEGMLDSEAANYWLPVDIYIGGIEHAIMHLLYFRFFHKLMRDAGMVNSDEPAKQLLCQGMVLADAFYYVGENGERNWVSPVDAIVERDEKGRIVKAKDAAGHELVYTGMSKMSKSKNNGIDPQVMVERYGADTVRLFMMFASPADMTLEWQESGVEGANRFLKRVWKLVYEHTAKGDVAALNVDALTEDQKALRRDVHKTIAKVTDDIGRRQTFNTAIAAIMELMNKLAKAPTDGEQDRALMQEALQAVVRMLNPFTPHICFTLWQELKGEGDIDNAPWPVADEKAMVEDSTLVVVQVNGKVRAKITVPVDATEEQVRERAGQEHLVAKYLDGVTVRKVIYVPGKLLNLVVG.

The short motif at 73-83 (VLQPIGWDAFG) is the 'HIGH' region element. Residues 650–654 (SPADM) carry the 'KMSKS' region motif. D653 serves as a coordination point for ATP.

This sequence belongs to the class-I aminoacyl-tRNA synthetase family.

It is found in the cytoplasm. The enzyme catalyses tRNA(Leu) + L-leucine + ATP = L-leucyl-tRNA(Leu) + AMP + diphosphate. This chain is Leucine--tRNA ligase, found in Shigella flexneri.